A 119-amino-acid polypeptide reads, in one-letter code: Ribonuclease P protein component (119 aa).

This sequence belongs to the RnpA family. As to quaternary structure, consists of a catalytic RNA component (M1 or rnpB) and a protein subunit.

It carries out the reaction Endonucleolytic cleavage of RNA, removing 5'-extranucleotides from tRNA precursor.. Its function is as follows. RNaseP catalyzes the removal of the 5'-leader sequence from pre-tRNA to produce the mature 5'-terminus. It can also cleave other RNA substrates such as 4.5S RNA. The protein component plays an auxiliary but essential role in vivo by binding to the 5'-leader sequence and broadening the substrate specificity of the ribozyme. This chain is Ribonuclease P protein component, found in Yersinia enterocolitica serotype O:8 / biotype 1B (strain NCTC 13174 / 8081).